The chain runs to 466 residues: Uronate isomerase (466 aa).

The protein belongs to the metallo-dependent hydrolases superfamily. Uronate isomerase family.

It catalyses the reaction D-glucuronate = D-fructuronate. The enzyme catalyses aldehydo-D-galacturonate = keto-D-tagaturonate. It functions in the pathway carbohydrate metabolism; pentose and glucuronate interconversion. This Brucella canis (strain ATCC 23365 / NCTC 10854 / RM-666) protein is Uronate isomerase.